The chain runs to 256 residues: Pimeloyl-[acyl-carrier protein] methyl ester esterase (256 aa).

One can recognise an AB hydrolase-1 domain in the interval 15-242; sequence HLVLLHGWGL…AAHAPFISHP (228 aa). Residues Trp22, 82–83, and 143–147 each bind substrate; these read SL and FLALQ. The Nucleophile role is filled by Ser82. Catalysis depends on residues Asp207 and His235. Substrate is bound at residue His235.

Belongs to the AB hydrolase superfamily. Carboxylesterase BioH family. In terms of assembly, monomer.

It is found in the cytoplasm. It catalyses the reaction 6-carboxyhexanoyl-[ACP] methyl ester + H2O = 6-carboxyhexanoyl-[ACP] + methanol + H(+). It participates in cofactor biosynthesis; biotin biosynthesis. The physiological role of BioH is to remove the methyl group introduced by BioC when the pimeloyl moiety is complete. It allows to synthesize pimeloyl-ACP via the fatty acid synthetic pathway through the hydrolysis of the ester bonds of pimeloyl-ACP esters. The protein is Pimeloyl-[acyl-carrier protein] methyl ester esterase of Escherichia coli O8 (strain IAI1).